We begin with the raw amino-acid sequence, 413 residues long: METAAKTNKRDIQDGPPKEVKLPISEALLDYHCQIKENALEQFMARIKKLREKNQKYHERNKRLKDEQIWHIRNLLKELSEEKSEGSVVVTREEVENAMKEKWKFERDQEQNLKDMRIQISNAEKLFLEKLSEKEYWEEYKNVGSEQHGKLITSLQNDINRVKENAEKMSEQYKITLEDARKRIIRETLLQLDQKKEWATENALRFIDKGSYREIWENDWLKKEIANHRKEVEELENAIHELEEENLVLIDQLFNCRLVDLKIPRRLYLTQAVGQEVPPEVPLELSETHKVIPEKSDSQPVDIKSRDVSSISFGSSGFRLSHKDSRFGQLLKIDEEASSSIEFGASDMKYLLYEDEQDFKDYVNLGPLEVKLMTVESKKMPIHFQEKETPVKFYEDVRSPESHITYKMMKSFL.

2 coiled-coil regions span residues H32–R186 and I215–N255.

This Bos taurus (Bovine) protein is Coiled-coil domain-containing protein 83 (CCDC83).